The chain runs to 105 residues: Zinc metalloproteinase/disintegrin (105 aa).

Positions 1–3 constitute a Peptidase M12B domain; that stretch reads DEP. A Disintegrin domain is found at 11–96; that stretch reads PPVCGNYFVE…AECTDRFQRN (86 aa). 6 disulfides stabilise this stretch: C25-C43, C27-C38, C37-C60, C51-C57, C56-C82, and C69-C89. The D/ECD-tripeptide signature appears at 75-77; sequence ECD. The propeptide occupies 99-105; that stretch reads PCQNNNG.

Belongs to the venom metalloproteinase (M12B) family. P-III subfamily. Monomer. Zn(2+) serves as cofactor. In terms of tissue distribution, expressed by the venom gland.

The protein localises to the secreted. Its function is as follows. Impairs hemostasis in the envenomed animal. In terms of biological role, inhibits platelet aggregation induced by ADP, thrombin, platelet-activating factor and collagen. Acts by inhibiting fibrinogen interaction with platelet receptors GPIIb/GPIIIa (ITGA2B/ITGB3). The protein is Zinc metalloproteinase/disintegrin of Gloydius brevicauda (Korean slamosa snake).